Here is a 135-residue protein sequence, read N- to C-terminus: Dihydromethanopterin reductase (135 aa).

NADP(+)-binding positions include Ala-9, 16–21 (LGLNGH), 52–54 (PKT), and 93–97 (GGIAV).

Homodimer.

It carries out the reaction 5,6,7,8-tetrahydromethanopterin + NAD(+) = 7,8-dihydromethanopterin + NADH + H(+). The catalysed reaction is 5,6,7,8-tetrahydromethanopterin + NADP(+) = 7,8-dihydromethanopterin + NADPH + H(+). It participates in cofactor biosynthesis; 5,6,7,8-tetrahydromethanopterin biosynthesis. Catalyzes the reduction of dihydromethanopterin (H(2)MPT) to tetrahydromethanopterin (H(4)MPT). Shows preference for NADPH rather than NADH as electron donor. Does not reduce dihydrofolate. This is Dihydromethanopterin reductase (dmrA) from Methylorubrum extorquens (strain ATCC 14718 / DSM 1338 / JCM 2805 / NCIMB 9133 / AM1) (Methylobacterium extorquens).